The following is a 388-amino-acid chain: Nocturnin (388 aa).

Position 152 (E152) interacts with Mg(2+). Substrate is bound by residues E152, 176-178 (KPW), N220, 243-246 (HLKA), 281-283 (DFN), and H371.

Belongs to the CCR4/nocturin family. Requires Mg(2+) as cofactor. Expressed only in the photoreceptors of the retina. Expression is controlled by the retinal circadian clock.

It is found in the cytoplasm. The protein localises to the nucleus. It localises to the perinuclear region. Its subcellular location is the mitochondrion. The catalysed reaction is NADP(+) + H2O = phosphate + NAD(+). It catalyses the reaction NADPH + H2O = phosphate + NADH. In terms of biological role, phosphatase which catalyzes the conversion of NADP(+) to NAD(+) and of NADPH to NADH. Shows a small preference for NADPH over NADP(+). Component of the circadian clock or downstream effector of clock function. Exhibits a high amplitude circadian rhythm with maximal levels in early evening. In constant darkness or constant light, the amplitude of the rhythm decreases. The polypeptide is Nocturnin (Xenopus laevis (African clawed frog)).